The primary structure comprises 473 residues: Probable glycine dehydrogenase (decarboxylating) subunit 2 (473 aa).

The segment at 1–40 (MEHYEQARYAPAEGETNEPLLSENDQTTVSVDPSLPDDLT) is disordered. The residue at position 270 (K270) is an N6-(pyridoxal phosphate)lysine.

Belongs to the GcvP family. C-terminal subunit subfamily. As to quaternary structure, the glycine cleavage system is composed of four proteins: P, T, L and H. In this organism, the P 'protein' is a heterodimer of two subunits. The cofactor is pyridoxal 5'-phosphate.

The enzyme catalyses N(6)-[(R)-lipoyl]-L-lysyl-[glycine-cleavage complex H protein] + glycine + H(+) = N(6)-[(R)-S(8)-aminomethyldihydrolipoyl]-L-lysyl-[glycine-cleavage complex H protein] + CO2. The glycine cleavage system catalyzes the degradation of glycine. The P protein binds the alpha-amino group of glycine through its pyridoxal phosphate cofactor; CO(2) is released and the remaining methylamine moiety is then transferred to the lipoamide cofactor of the H protein. This is Probable glycine dehydrogenase (decarboxylating) subunit 2 from Halobacterium salinarum (strain ATCC 700922 / JCM 11081 / NRC-1) (Halobacterium halobium).